A 229-amino-acid chain; its full sequence is MLSLIVLLEKETLRFSQMVLAWGNGRVGASGGIGIHFPNGELQDISLEFDKGCCTNQRTELYAILYAIQYIDDNFDLNKCKVMIKTDSTYSVNSITKWAEGHSRNDWCKRTGEPIANREFIQEIYEYYQNFNIDFEWVEAHTGQTDSESIANAQADFLANSAAKRAARDKKICRPSSSGSKRNSREFYCEKSSKQVYNTPYRSKSRASINGFPIDDDFEIELVKRRSDN.

Residues 42–164 (LQDISLEFDK…ADFLANSAAK (123 aa)) form the RNase H type-1 domain. Residues Glu60, Asp87, and Asp156 each coordinate a divalent metal cation.

It belongs to the RNase H family. It depends on a divalent metal cation as a cofactor.

The enzyme catalyses Endonucleolytic cleavage to 5'-phosphomonoester.. Its function is as follows. Endonuclease that specifically degrades the RNA of RNA-DNA hybrids. The chain is Probable ribonuclease H (RNH1) from Acanthamoeba polyphaga mimivirus (APMV).